The following is a 98-amino-acid chain: Nucleoid-associated protein pc0477 (98 aa).

This sequence belongs to the YbaB/EbfC family. Homodimer.

It is found in the cytoplasm. The protein localises to the nucleoid. In terms of biological role, binds to DNA and alters its conformation. May be involved in regulation of gene expression, nucleoid organization and DNA protection. The chain is Nucleoid-associated protein pc0477 from Protochlamydia amoebophila (strain UWE25).